The primary structure comprises 374 residues: Acetylxylan esterase (374 aa).

The first 22 residues, 1 to 22, serve as a signal peptide directing secretion; that stretch reads MVFSPRLSAFVALVALTNAATA. One can recognise a CBM1 domain in the interval 23-57; it reads VPMYGQCGGSGYTGPTQCDPGLVCVKLNDWYSQCQ. The segment at 58–99 is ser/Thr/Pro-rich linker; that stretch reads SGGAQPPVTTTSSPPVTVSPPPSTTTVAPPVATGPPAPEIPA. A disordered region spans residues 60–86; it reads GAQPPVTTTSSPPVTVSPPPSTTTVAP. A compositionally biased stretch (low complexity) spans 63-73; that stretch reads PPVTTTSSPPV. The interval 100–374 is catalytic; that stretch reads GQLTQLRSFG…EVVAMDFFGL (275 aa). A glycan (N-linked (GlcNAc...) asparagine) is linked at Asn-114. Ser-219 functions as the Charge relay system in the catalytic mechanism. N-linked (GlcNAc...) asparagine glycosylation is present at Asn-320.

The protein belongs to the carbohydrate esterase 1 (CE1) family. AxeA subfamily. Monomer. Glycosylated.

Its subcellular location is the secreted. The catalysed reaction is Deacetylation of xylans and xylo-oligosaccharides.. Its pathway is glycan degradation; xylan degradation. In terms of biological role, acetylxylan esterase involved in the hydrolysis of xylan, a major structural heterogeneous polysaccharide found in plant biomass representing the second most abundant polysaccharide in the biosphere, after cellulose. Degrades acetylated xylans by cleaving acetyl side groups from the hetero-xylan backbone. This chain is Acetylxylan esterase, found in Coprinopsis cinerea (strain Okayama-7 / 130 / ATCC MYA-4618 / FGSC 9003) (Inky cap fungus).